Consider the following 242-residue polypeptide: Orotidine 5'-phosphate decarboxylase (242 aa).

Residues D22, K44, 71–80 (DLKYHDIPNT), T130, R190, Q199, G219, and R220 each bind substrate. K73 acts as the Proton donor in catalysis.

Belongs to the OMP decarboxylase family. Type 1 subfamily. As to quaternary structure, homodimer.

The enzyme catalyses orotidine 5'-phosphate + H(+) = UMP + CO2. It functions in the pathway pyrimidine metabolism; UMP biosynthesis via de novo pathway; UMP from orotate: step 2/2. In terms of biological role, catalyzes the decarboxylation of orotidine 5'-monophosphate (OMP) to uridine 5'-monophosphate (UMP). This chain is Orotidine 5'-phosphate decarboxylase, found in Laribacter hongkongensis (strain HLHK9).